The primary structure comprises 259 residues: MAEDATLVDETALEAAAGESPPSNATACGELAPSPLLRGKWLKDDMPRERLLRQGPGVLSDTEMIVLILGSGLPGHDVFSVARELLDRFGSLRAMLDATYTDFDGLRGIGPAKKAQLLAIMEMARRSLVDKLRSRSLLNSPEAVENYLRLRIGGRPLEVFVSLFLDARHRLIHCEESAQGTLTRMAVYPREIVRRALSLNAASLIVAHNHPSGAVQPSASDCRLTHTLRDALTLIDVQLVDHLVVGVDSVYSFARAGWP.

The region spanning 137–259 (LLNSPEAVEN…VYSFARAGWP (123 aa)) is the MPN domain. Residues H208, H210, and D221 each contribute to the Zn(2+) site. Residues 208 to 221 (HNHPSGAVQPSASD) carry the JAMM motif motif.

Belongs to the UPF0758 family.

The chain is UPF0758 protein Bphyt_3148 from Paraburkholderia phytofirmans (strain DSM 17436 / LMG 22146 / PsJN) (Burkholderia phytofirmans).